We begin with the raw amino-acid sequence, 58 residues long: U7-ctenitoxin-Pr1a (58 aa).

6 cysteine pairs are disulfide-bonded: C2–C16, C9–C22, C13–C48, C15–C40, C18–C55, and C24–C38.

As to expression, expressed by the venom gland.

Its subcellular location is the secreted. Its function is as follows. Probable neurotoxin. The chain is U7-ctenitoxin-Pr1a from Phoneutria reidyi (Brazilian Amazonian armed spider).